The following is a 455-amino-acid chain: Bifunctional protein GlmU (455 aa).

Residues methionine 1 to arginine 226 are pyrophosphorylase. Residues leucine 8–glycine 11, lysine 22, glutamine 73, glycine 78–threonine 79, tyrosine 99–aspartate 101, glycine 136, glutamate 151, asparagine 166, and asparagine 224 contribute to the UDP-N-acetyl-alpha-D-glucosamine site. Aspartate 101 contributes to the Mg(2+) binding site. Asparagine 224 contacts Mg(2+). The tract at residues lysine 227–glutamine 247 is linker. The interval glycine 248 to aspartate 455 is N-acetyltransferase. Arginine 330 and lysine 348 together coordinate UDP-N-acetyl-alpha-D-glucosamine. The active-site Proton acceptor is histidine 360. Positions 363 and 374 each coordinate UDP-N-acetyl-alpha-D-glucosamine. Residues alanine 377, asparagine 383–tyrosine 384, serine 402, alanine 420, and arginine 437 each bind acetyl-CoA.

This sequence in the N-terminal section; belongs to the N-acetylglucosamine-1-phosphate uridyltransferase family. The protein in the C-terminal section; belongs to the transferase hexapeptide repeat family. In terms of assembly, homotrimer. It depends on Mg(2+) as a cofactor.

The protein localises to the cytoplasm. It catalyses the reaction alpha-D-glucosamine 1-phosphate + acetyl-CoA = N-acetyl-alpha-D-glucosamine 1-phosphate + CoA + H(+). It carries out the reaction N-acetyl-alpha-D-glucosamine 1-phosphate + UTP + H(+) = UDP-N-acetyl-alpha-D-glucosamine + diphosphate. It participates in nucleotide-sugar biosynthesis; UDP-N-acetyl-alpha-D-glucosamine biosynthesis; N-acetyl-alpha-D-glucosamine 1-phosphate from alpha-D-glucosamine 6-phosphate (route II): step 2/2. It functions in the pathway nucleotide-sugar biosynthesis; UDP-N-acetyl-alpha-D-glucosamine biosynthesis; UDP-N-acetyl-alpha-D-glucosamine from N-acetyl-alpha-D-glucosamine 1-phosphate: step 1/1. The protein operates within bacterial outer membrane biogenesis; LPS lipid A biosynthesis. Functionally, catalyzes the last two sequential reactions in the de novo biosynthetic pathway for UDP-N-acetylglucosamine (UDP-GlcNAc). The C-terminal domain catalyzes the transfer of acetyl group from acetyl coenzyme A to glucosamine-1-phosphate (GlcN-1-P) to produce N-acetylglucosamine-1-phosphate (GlcNAc-1-P), which is converted into UDP-GlcNAc by the transfer of uridine 5-monophosphate (from uridine 5-triphosphate), a reaction catalyzed by the N-terminal domain. The chain is Bifunctional protein GlmU from Pseudomonas fluorescens (strain ATCC BAA-477 / NRRL B-23932 / Pf-5).